Consider the following 185-residue polypeptide: Large ribosomal subunit protein uL5 (185 aa).

The protein belongs to the universal ribosomal protein uL5 family. In terms of assembly, part of the 50S ribosomal subunit; part of the 5S rRNA/L5/L18/L25 subcomplex. Contacts the 5S rRNA and the P site tRNA. Forms a bridge to the 30S subunit in the 70S ribosome.

In terms of biological role, this is one of the proteins that bind and probably mediate the attachment of the 5S RNA into the large ribosomal subunit, where it forms part of the central protuberance. In the 70S ribosome it contacts protein S13 of the 30S subunit (bridge B1b), connecting the 2 subunits; this bridge is implicated in subunit movement. Contacts the P site tRNA; the 5S rRNA and some of its associated proteins might help stabilize positioning of ribosome-bound tRNAs. The protein is Large ribosomal subunit protein uL5 of Bradyrhizobium sp. (strain ORS 278).